A 187-amino-acid polypeptide reads, in one-letter code: Photosystem I assembly protein Ycf4 (187 aa).

A run of 2 helical transmembrane segments spans residues Tyr-25–Leu-47 and Phe-62–Trp-84.

It belongs to the Ycf4 family.

Its subcellular location is the plastid. It is found in the chloroplast thylakoid membrane. In terms of biological role, seems to be required for the assembly of the photosystem I complex. This is Photosystem I assembly protein Ycf4 from Mesostigma viride (Green alga).